The chain runs to 337 residues: Casein kinase II subunit alpha (337 aa).

The region spanning 47–332 is the Protein kinase domain; it reads YEIIRKIGRG…TREAMEHPYF (286 aa). ATP contacts are provided by residues 53–61 and Lys76; that span reads IGRGKYSEV. Asp164 functions as the Proton acceptor in the catalytic mechanism.

It belongs to the protein kinase superfamily. CMGC Ser/Thr protein kinase family. CK2 subfamily. Tetramer of two alpha and two beta chains.

It carries out the reaction L-seryl-[protein] + ATP = O-phospho-L-seryl-[protein] + ADP + H(+). It catalyses the reaction L-threonyl-[protein] + ATP = O-phospho-L-threonyl-[protein] + ADP + H(+). In terms of biological role, casein kinases are operationally defined by their preferential utilization of acidic proteins such as caseins as substrates. The alpha chain contains the catalytic site. The chain is Casein kinase II subunit alpha (casK) from Dictyostelium discoideum (Social amoeba).